A 730-amino-acid chain; its full sequence is Catalase-peroxidase (730 aa).

Residues 95–218 constitute a cross-link (tryptophyl-tyrosyl-methioninium (Trp-Tyr) (with M-244)); sequence WHSAGTYRVG…LAAVQMGLIY (124 aa). The active-site Proton acceptor is the H96. The segment at residues 218-244 is a cross-link (tryptophyl-tyrosyl-methioninium (Tyr-Met) (with W-95)); the sequence is YVNPEGPNGNPDPLGSAHDVRETFARM. Residue H259 participates in heme b binding.

Belongs to the peroxidase family. Peroxidase/catalase subfamily. Homodimer or homotetramer. It depends on heme b as a cofactor. Formation of the three residue Trp-Tyr-Met cross-link is important for the catalase, but not the peroxidase activity of the enzyme.

The catalysed reaction is H2O2 + AH2 = A + 2 H2O. It carries out the reaction 2 H2O2 = O2 + 2 H2O. In terms of biological role, bifunctional enzyme with both catalase and broad-spectrum peroxidase activity. This Clostridium botulinum (strain Eklund 17B / Type B) protein is Catalase-peroxidase.